The primary structure comprises 374 residues: Carbamoyl phosphate synthase small chain (374 aa).

Positions 1-186 (MTEHAILVLE…DRNECKRAAP (186 aa)) are CPSase. Residues Ser-47, Gly-237, and Gly-239 each contribute to the L-glutamine site. One can recognise a Glutamine amidotransferase type-1 domain in the interval 189–374 (KVVAYDYGVK…RFITMMAAQS (186 aa)). Catalysis depends on Cys-265, which acts as the Nucleophile. Residues Leu-266, Gln-269, Asn-307, Gly-309, and Phe-310 each coordinate L-glutamine. Residues His-349 and Glu-351 contribute to the active site.

The protein belongs to the CarA family. In terms of assembly, composed of two chains; the small (or glutamine) chain promotes the hydrolysis of glutamine to ammonia, which is used by the large (or ammonia) chain to synthesize carbamoyl phosphate. Tetramer of heterodimers (alpha,beta)4.

The enzyme catalyses hydrogencarbonate + L-glutamine + 2 ATP + H2O = carbamoyl phosphate + L-glutamate + 2 ADP + phosphate + 2 H(+). It catalyses the reaction L-glutamine + H2O = L-glutamate + NH4(+). The protein operates within amino-acid biosynthesis; L-arginine biosynthesis; carbamoyl phosphate from bicarbonate: step 1/1. Its pathway is pyrimidine metabolism; UMP biosynthesis via de novo pathway; (S)-dihydroorotate from bicarbonate: step 1/3. Its function is as follows. Small subunit of the glutamine-dependent carbamoyl phosphate synthetase (CPSase). CPSase catalyzes the formation of carbamoyl phosphate from the ammonia moiety of glutamine, carbonate, and phosphate donated by ATP, constituting the first step of 2 biosynthetic pathways, one leading to arginine and/or urea and the other to pyrimidine nucleotides. The small subunit (glutamine amidotransferase) binds and cleaves glutamine to supply the large subunit with the substrate ammonia. The polypeptide is Carbamoyl phosphate synthase small chain (Xylella fastidiosa (strain Temecula1 / ATCC 700964)).